The chain runs to 65 residues: Large ribosomal subunit protein bL35c (65 aa).

Basic residues predominate over residues 25 to 44; the sequence is HKASKSHLLQKKSSKQRRHL. The disordered stretch occupies residues 25–45; it reads HKASKSHLLQKKSSKQRRHLS.

This sequence belongs to the bacterial ribosomal protein bL35 family.

It localises to the plastid. The protein resides in the chloroplast. This is Large ribosomal subunit protein bL35c from Pyropia yezoensis (Susabi-nori).